The primary structure comprises 301 residues: MTANLTHLQRLEAESIHIMRGVAANFSKPVMLYSIGKDSSVLLHLAMKAFYPAKPPFPFLHVDTTWKFREMIEFRDRMAAELGFDLLVHINEEGVRDGINPFDHGSNVHTHIMKTVALRQALDKYGFDAAFGGARRDEEKSRAKERVFSFRTASHTWDPKNQRPEMWKIYNTRVAQGESIRVFPLSNWTELDIWQYILQEGIPIVPLYFAKKRPVVNRGGMTIMVDDDRMKLLPGETVEERMVRFRTLGCYPLTGAIDSCAATLEDIVSEMLTARTSERQGRLIDRDEAGSMEKKKREGYF.

Residues 282–301 are disordered; sequence RLIDRDEAGSMEKKKREGYF.

This sequence belongs to the PAPS reductase family. CysD subfamily. In terms of assembly, heterodimer composed of CysD, the smaller subunit, and CysN.

It carries out the reaction sulfate + ATP + H(+) = adenosine 5'-phosphosulfate + diphosphate. It functions in the pathway sulfur metabolism; hydrogen sulfide biosynthesis; sulfite from sulfate: step 1/3. With CysN forms the ATP sulfurylase (ATPS) that catalyzes the adenylation of sulfate producing adenosine 5'-phosphosulfate (APS) and diphosphate, the first enzymatic step in sulfur assimilation pathway. APS synthesis involves the formation of a high-energy phosphoric-sulfuric acid anhydride bond driven by GTP hydrolysis by CysN coupled to ATP hydrolysis by CysD. This is Sulfate adenylyltransferase subunit 2 from Chelativorans sp. (strain BNC1).